We begin with the raw amino-acid sequence, 504 residues long: Glucose-6-phosphate isomerase (504 aa).

The active-site Proton donor is the glutamate 333. Residues histidine 364 and lysine 473 contribute to the active site.

This sequence belongs to the GPI family.

Its subcellular location is the cytoplasm. The catalysed reaction is alpha-D-glucose 6-phosphate = beta-D-fructose 6-phosphate. The protein operates within carbohydrate biosynthesis; gluconeogenesis. Its pathway is carbohydrate degradation; glycolysis; D-glyceraldehyde 3-phosphate and glycerone phosphate from D-glucose: step 2/4. In terms of biological role, catalyzes the reversible isomerization of glucose-6-phosphate to fructose-6-phosphate. This is Glucose-6-phosphate isomerase from Xanthomonas euvesicatoria pv. vesicatoria (strain 85-10) (Xanthomonas campestris pv. vesicatoria).